The primary structure comprises 529 residues: PTS system alpha-glucoside-specific EIICB component (529 aa).

Positions 1-416 constitute a PTS EIIC type-1 domain; that stretch reads MMKKVQRFGG…MDLKTPGRED (416 aa). 12 helical membrane passes run 8 to 28, 59 to 79, 91 to 111, 130 to 150, 170 to 190, 198 to 218, 222 to 242, 272 to 292, 304 to 324, 328 to 348, 352 to 372, and 380 to 400; these read FGGAMMAPVLLFAFTGIVVGL, GWTVFRQMPILFAIGLPISLA, FALYTTFNYFVAAILKVFYGI, VPTLDTNLFGGILIAALVVYL, VFVYIVGFVVMIPCAFLTVLI, ISALQGFMKASGIFGVWIYTF, ILIPTGLHHFVYTPFVFGPAA, GGFALHGNSKIFGAPGIALAM, VAALLIPIIFTAVISGITEPL, FLFIAPVLFAVHACLAATMAA, AFGVVGNMGGGLLDFFFLNWI, and GTVIAQIVIGLIFTAIYFVVF. The 80-residue stretch at 450–529 folds into the PTS EIIB type-1 domain; that stretch reads AQKGAIILEA…ERIEEMMKKG (80 aa). The active-site Phosphocysteine intermediate; for EIIB activity is the Cys-472.

The protein localises to the cell membrane. In terms of biological role, the phosphoenolpyruvate-dependent sugar phosphotransferase system (sugar PTS), a major carbohydrate active -transport system, catalyzes the phosphorylation of incoming sugar substrates concomitantly with their translocation across the cell membrane. This system is probably involved in transport of the alpha-glucosides trehalulose, turanose, maltulose and palatinose. This Leptotrichia buccalis (strain ATCC 14201 / DSM 1135 / JCM 12969 / NCTC 10249 / C-1013-b) protein is PTS system alpha-glucoside-specific EIICB component.